The sequence spans 375 residues: MKEEIQNETAQTQLQREGRMFSFLFPVIEVIKVVMASVASVVFLGFGGVTLACSAVALAVSTPLFIIFSPILVPATIATTLLATGLGAGTTLGVTGMGLLMRLIKHPGKEGAASAPAAQPSFLSLLEMPNFIKSKMLERLIHIPGVGKKSEGRGESKGKKGKKGKSEHGRGKHEGEGKSKGRKGHRMGVNPENNPPPAGAPPTGSPPAAPAAPEAPAAPAAPAAPAAPAAPAAPAAPEDPAAPAAPEAPATPAAPPAPAAAPAPAAPAAPPAPAAPPRPPSFLSLLEMPSFIKSKLIEALINIPGFGKKSNDRGKSKGGKKSKGKGKSNGRGKHEGEGKSKSRKSKSRGKDKEKSKGKGIFGRSSRKGSSDDESS.

Residues 1–32 (MKEEIQNETAQTQLQREGRMFSFLFPVIEVIK) are polar. 3 consecutive transmembrane segments (helical) span residues 21 to 43 (FSFLFPVIEVIKVVMASVASVVF), 55 to 75 (AVALAVSTPLFIIFSPILVPA), and 81 to 101 (LLATGLGAGTTLGVTGMGLLM). A hydrophobic region spans residues 33-112 (VVMASVASVV…LIKHPGKEGA (80 aa)). Disordered regions lie at residues 144–284 (PGVG…SFLS) and 303–375 (IPGF…DESS). Residues 148–179 (KKSEGRGESKGKKGKKGKSEHGRGKHEGEGKS) show a composition bias toward basic and acidic residues. The segment covering 193–210 (NNPPPAGAPPTGSPPAAP) has biased composition (pro residues). 23 repeat units span residues 207 to 209 (PAA), 210 to 212 (PAA), 213 to 215 (PEA), 216 to 218 (PAA), 219 to 221 (PAA), 222 to 224 (PAA), 225 to 227 (PAA), 228 to 230 (PAA), 231 to 233 (PAA), 234 to 236 (PAA), 237 to 239 (PED), 240 to 242 (PAA), 243 to 245 (PAA), 246 to 248 (PEA), 249 to 251 (PAT), 252 to 254 (PAA), 255 to 257 (PPA), 258 to 260 (PAA), 261 to 263 (APA), 264 to 266 (PAA), 267 to 269 (PAA), 270 to 272 (PPA), and 273 to 275 (PAA). Positions 207 to 275 (PAAPAAPEAP…APAAPPAPAA (69 aa)) are 23 X 3 AA approximate tandem repeats of P-A-A. Residues 211-251 (AAPEAPAAPAAPAAPAAPAAPAAPAAPEDPAAPAAPEAPAT) are compositionally biased toward low complexity. The segment covering 252–280 (PAAPPAPAAAPAPAAPAAPPAPAAPPRPP) has biased composition (pro residues). The segment covering 316–331 (SKGGKKSKGKGKSNGR) has biased composition (basic residues).

The protein belongs to the oleosin family. In terms of tissue distribution, the full-length protein is found in the tapetal lipid bodies of immature anthers, the proteolytically cleaved C-terminal product is found on the coats of pollen grains. Not found in flowers, developing embryos or leaf tissue.

The protein localises to the lipid droplet. It is found in the membrane. In terms of biological role, many of the major pollen coat proteins are derived from endoproteolytic cleavage of oleosin-like proteins. The sequence is that of Oleosin-B6 from Brassica napus (Rape).